A 260-amino-acid chain; its full sequence is MTSLKLLKEKAPLVICITNDVVKNFTANGLVALGASPAMSEFPADLEDLLKYAGGLLINIGTLTDENWKLYQAALKIAEKYNVPVVLDPVACGAGEYRKKVADDLINNYKLAAIRGNAGEIASLVGIDVASKGVDSAGVDNIDEIALAANEKFNIPIVVTGEVDAIAVNGEVVTIHNGSAMMPKVIGTGCLLGAVVASFIGLEKGQELKSLETAMLVYNIAGEMAEKRPNGHLPGTFKVEFINALYEITDEDVKEFKRVK.

M39 is a substrate binding site. Positions 115 and 160 each coordinate ATP. G187 is a binding site for substrate.

This sequence belongs to the Thz kinase family. Mg(2+) is required as a cofactor.

It carries out the reaction 5-(2-hydroxyethyl)-4-methylthiazole + ATP = 4-methyl-5-(2-phosphooxyethyl)-thiazole + ADP + H(+). It participates in cofactor biosynthesis; thiamine diphosphate biosynthesis; 4-methyl-5-(2-phosphoethyl)-thiazole from 5-(2-hydroxyethyl)-4-methylthiazole: step 1/1. Catalyzes the phosphorylation of the hydroxyl group of 4-methyl-5-beta-hydroxyethylthiazole (THZ). This Streptococcus pneumoniae (strain ATCC 700669 / Spain 23F-1) protein is Hydroxyethylthiazole kinase 1.